Reading from the N-terminus, the 146-residue chain is 3-dehydroquinate dehydratase (146 aa).

The Proton acceptor role is filled by Y23. Residues N79, H85, and D92 each contribute to the substrate site. H105 serves as the catalytic Proton donor. Residues 106-107 (IS) and R116 contribute to the substrate site.

It belongs to the type-II 3-dehydroquinase family. In terms of assembly, homododecamer.

It catalyses the reaction 3-dehydroquinate = 3-dehydroshikimate + H2O. It participates in metabolic intermediate biosynthesis; chorismate biosynthesis; chorismate from D-erythrose 4-phosphate and phosphoenolpyruvate: step 3/7. Its function is as follows. Catalyzes a trans-dehydration via an enolate intermediate. The polypeptide is 3-dehydroquinate dehydratase (Variovorax paradoxus (strain S110)).